We begin with the raw amino-acid sequence, 93 residues long: Large ribosomal subunit protein uL23 (93 aa).

Belongs to the universal ribosomal protein uL23 family. In terms of assembly, part of the 50S ribosomal subunit. Contacts protein L29, and trigger factor when it is bound to the ribosome.

In terms of biological role, one of the early assembly proteins it binds 23S rRNA. One of the proteins that surrounds the polypeptide exit tunnel on the outside of the ribosome. Forms the main docking site for trigger factor binding to the ribosome. This chain is Large ribosomal subunit protein uL23, found in Helicobacter acinonychis (strain Sheeba).